A 245-amino-acid chain; its full sequence is Dehydrogenase/reductase SDR family member 6 (245 aa).

NAD(+) is bound by residues 16-18 (QGI), Asp37, and Asp58. Arg144 contacts substrate. Residue Tyr147 is the Proton acceptor of the active site. NAD(+)-binding positions include Lys151 and 180 to 184 (VDTPS). Residues Arg188 and Arg205 each contribute to the substrate site.

This sequence belongs to the short-chain dehydrogenases/reductases (SDR) family. In terms of assembly, homotetramer.

It is found in the cytoplasm. The enzyme catalyses cis-4-hydroxy-L-proline + NAD(+) = 4-oxo-L-proline + NADH + H(+). It catalyses the reaction (R)-3-hydroxybutanoate + NAD(+) = acetoacetate + NADH + H(+). It functions in the pathway amino-acid metabolism. It participates in siderophore biosynthesis. Its function is as follows. NAD(H)-dependent dehydrogenase/reductase with a preference for cyclic substrates. Catalyzes stereoselective conversion of 4-oxo-L-proline to cis-4-hydroxy-L-proline, likely a detoxification mechanism for ketoprolines. Mediates the formation of 2,5-dihydroxybenzoate (2,5-DHBA), a siderophore that chelates free cytoplasmic iron, thereby regulating iron transport and homeostasis while protecting cells against free radical-induced oxidative stress. The iron-siderophore complex is imported into mitochondria, providing an iron source for mitochondrial metabolic processes in particular heme synthesis. May act as a 3-hydroxybutyrate dehydrogenase. The protein is Dehydrogenase/reductase SDR family member 6 (bdh2) of Xenopus laevis (African clawed frog).